Consider the following 750-residue polypeptide: Photosystem I P700 chlorophyll a apoprotein A1 (750 aa).

The next 8 membrane-spanning stretches (helical) occupy residues valine 70 to alanine 93, leucine 156 to histidine 179, leucine 195 to leucine 219, isoleucine 291 to tyrosine 309, tryptophan 346 to tyrosine 369, leucine 385 to valine 411, alanine 433 to histidine 455, and phenylalanine 531 to leucine 549. 2 residues coordinate [4Fe-4S] cluster: cysteine 573 and cysteine 582. The next 2 membrane-spanning stretches (helical) occupy residues histidine 589 to tryptophan 610 and leucine 664 to phenylalanine 686. Histidine 675 serves as a coordination point for chlorophyll a'. Positions 683 and 691 each coordinate chlorophyll a. Position 692 (tryptophan 692) interacts with phylloquinone. Residues alanine 724–alanine 744 form a helical membrane-spanning segment.

It belongs to the PsaA/PsaB family. The PsaA/B heterodimer binds the P700 chlorophyll special pair and subsequent electron acceptors. PSI consists of a core antenna complex that captures photons, and an electron transfer chain that converts photonic excitation into a charge separation. The eukaryotic PSI reaction center is composed of at least 11 subunits. P700 is a chlorophyll a/chlorophyll a' dimer, A0 is one or more chlorophyll a, A1 is one or both phylloquinones and FX is a shared 4Fe-4S iron-sulfur center. serves as cofactor.

The protein resides in the plastid. Its subcellular location is the chloroplast thylakoid membrane. The catalysed reaction is reduced [plastocyanin] + hnu + oxidized [2Fe-2S]-[ferredoxin] = oxidized [plastocyanin] + reduced [2Fe-2S]-[ferredoxin]. PsaA and PsaB bind P700, the primary electron donor of photosystem I (PSI), as well as the electron acceptors A0, A1 and FX. PSI is a plastocyanin-ferredoxin oxidoreductase, converting photonic excitation into a charge separation, which transfers an electron from the donor P700 chlorophyll pair to the spectroscopically characterized acceptors A0, A1, FX, FA and FB in turn. Oxidized P700 is reduced on the lumenal side of the thylakoid membrane by plastocyanin. In Agrostis stolonifera (Creeping bentgrass), this protein is Photosystem I P700 chlorophyll a apoprotein A1.